The sequence spans 361 residues: Sensor protein VanSC (361 aa).

The next 2 helical transmembrane spans lie at 16-36 (FVTTGILLAFLVMIPLVIRFI) and 59-79 (WLFCVAIGALLIWFGTTIYYM). Residues 144–359 (YLAHDLRTPL…IFNVRLPKPA (216 aa)) enclose the Histidine kinase domain. Histidine 147 bears the Phosphohistidine; by autocatalysis mark. Glutamate 252 is a Mg(2+) binding site.

Autophosphorylated.

It localises to the membrane. The catalysed reaction is ATP + protein L-histidine = ADP + protein N-phospho-L-histidine.. This chain is Sensor protein VanSC, found in Enterococcus gallinarum.